The following is a 430-amino-acid chain: UDP-N-acetylmuramoylalanine--D-glutamate ligase (430 aa).

109–115 serves as a coordination point for ATP; it reads GTDGKST.

Belongs to the MurCDEF family.

The protein localises to the cytoplasm. It catalyses the reaction UDP-N-acetyl-alpha-D-muramoyl-L-alanine + D-glutamate + ATP = UDP-N-acetyl-alpha-D-muramoyl-L-alanyl-D-glutamate + ADP + phosphate + H(+). It functions in the pathway cell wall biogenesis; peptidoglycan biosynthesis. In terms of biological role, cell wall formation. Catalyzes the addition of glutamate to the nucleotide precursor UDP-N-acetylmuramoyl-L-alanine (UMA). The protein is UDP-N-acetylmuramoylalanine--D-glutamate ligase of Thermotoga maritima (strain ATCC 43589 / DSM 3109 / JCM 10099 / NBRC 100826 / MSB8).